The sequence spans 269 residues: Transcription factor MYB7 (269 aa).

HTH myb-type domains are found at residues 9–61 and 62–116; these read KEHM…INYL and RPDL…KRKL. DNA-binding regions (H-T-H motif) lie at residues 37-61 and 89-112; these read WRSLPRAAGLLRCGKSCRLRWINYL and WSLIAARLPGRTDNEIKNYWNTHI.

In terms of assembly, interacts with SAD2. Expressed in anthers. Expressed in pollen grains and mature seeds. Expressed in roots and vasculature of leaves.

The protein localises to the nucleus. Functionally, transcription factor involved in the negative regulation of flavonol biosynthesis. Represses the early phenylpropanoid genes, phenylalanine ammonia-lyase (PAL), cinnamate 4-hydroxylase (C4H) and 4-coumarate-CoA ligase (4CL), as well as the flavonoid-specific genes, flavonoid 3'-hydroxylase (F3'H) and dihydroflavonol 4-reductase (DFR). Plays a role in seed germination inhibition. Negatively regulates the expression of the abscisic acid (ABA) signaling transcription factor ABI5 in seeds. The sequence is that of Transcription factor MYB7 from Arabidopsis thaliana (Mouse-ear cress).